Here is a 95-residue protein sequence, read N- to C-terminus: Large ribosomal subunit protein uL23 (95 aa).

This sequence belongs to the universal ribosomal protein uL23 family. In terms of assembly, part of the 50S ribosomal subunit. Contacts protein L29, and trigger factor when it is bound to the ribosome.

Its function is as follows. One of the early assembly proteins it binds 23S rRNA. One of the proteins that surrounds the polypeptide exit tunnel on the outside of the ribosome. Forms the main docking site for trigger factor binding to the ribosome. The sequence is that of Large ribosomal subunit protein uL23 from Thermodesulfovibrio yellowstonii (strain ATCC 51303 / DSM 11347 / YP87).